The following is a 481-amino-acid chain: Cysteine--tRNA ligase (481 aa).

Cys-27 contacts Zn(2+). A 'HIGH' region motif is present at residues 29–39 (PTVYNYAHIGN). Residues Cys-222, His-247, and Glu-251 each contribute to the Zn(2+) site. The 'KMSKS' region signature appears at 279–283 (KMSKS). Lys-282 provides a ligand contact to ATP.

The protein belongs to the class-I aminoacyl-tRNA synthetase family. As to quaternary structure, monomer. The cofactor is Zn(2+).

It is found in the cytoplasm. It catalyses the reaction tRNA(Cys) + L-cysteine + ATP = L-cysteinyl-tRNA(Cys) + AMP + diphosphate. The polypeptide is Cysteine--tRNA ligase (Borrelia hermsii (strain HS1 / DAH)).